The following is a 514-amino-acid chain: Maturase K (514 aa).

This sequence belongs to the intron maturase 2 family. MatK subfamily.

It localises to the plastid. The protein localises to the chloroplast. In terms of biological role, usually encoded in the trnK tRNA gene intron. Probably assists in splicing its own and other chloroplast group II introns. This chain is Maturase K, found in Phoenix dactylifera (Date palm).